The sequence spans 1034 residues: Presequence protease, mitochondrial (1034 aa).

A mitochondrion-targeting transit peptide spans M1–S26. H97 is a binding site for Zn(2+). Catalysis depends on E100, which acts as the Proton acceptor. H101 is a binding site for Zn(2+). E173 is a catalytic residue. A Zn(2+)-binding site is contributed by E198.

The protein belongs to the peptidase M16 family. PreP subfamily. In terms of assembly, monomer and homodimer; homodimerization is induced by binding of the substrate. Zn(2+) is required as a cofactor.

It is found in the mitochondrion intermembrane space. It localises to the mitochondrion matrix. Functionally, degrades mitochondrial transit peptides after their cleavage in the intermembrane space or in the matrix, and presequence peptides; clearance of these peptides is required to keep the presequence processing machinery running. Preferentially cleaves the N-terminal side of paired basic amino acid residues. Also degrades other unstructured peptides. May function as an ATP-dependent peptidase as opposed to a metalloendopeptidase. This Candida albicans (strain SC5314 / ATCC MYA-2876) (Yeast) protein is Presequence protease, mitochondrial (CYM1).